The chain runs to 285 residues: Dermonecrotic toxin LlSicTox-alphaIII1ii (285 aa).

Residue histidine 12 is part of the active site. Mg(2+) is bound by residues glutamate 32 and aspartate 34. Residue histidine 47 is the Nucleophile of the active site. The cysteines at positions 51 and 57 are disulfide-linked. A Mg(2+)-binding site is contributed by aspartate 91.

It belongs to the arthropod phospholipase D family. Class I subfamily. Mg(2+) serves as cofactor. As to expression, expressed by the venom gland.

The protein resides in the secreted. It carries out the reaction an N-(acyl)-sphingosylphosphocholine = an N-(acyl)-sphingosyl-1,3-cyclic phosphate + choline. It catalyses the reaction an N-(acyl)-sphingosylphosphoethanolamine = an N-(acyl)-sphingosyl-1,3-cyclic phosphate + ethanolamine. The enzyme catalyses a 1-acyl-sn-glycero-3-phosphocholine = a 1-acyl-sn-glycero-2,3-cyclic phosphate + choline. The catalysed reaction is a 1-acyl-sn-glycero-3-phosphoethanolamine = a 1-acyl-sn-glycero-2,3-cyclic phosphate + ethanolamine. In terms of biological role, dermonecrotic toxins cleave the phosphodiester linkage between the phosphate and headgroup of certain phospholipids (sphingolipid and lysolipid substrates), forming an alcohol (often choline) and a cyclic phosphate. This toxin acts on sphingomyelin (SM) with high activity (56.8 U/mg). It may also act on ceramide phosphoethanolamine (CPE), lysophosphatidylcholine (LPC) and lysophosphatidylethanolamine (LPE), but not on lysophosphatidylserine (LPS), and lysophosphatidylglycerol (LPG). It acts by transphosphatidylation, releasing exclusively cyclic phosphate products as second products. Induces dermonecrosis, hemolysis, increased vascular permeability, edema, inflammatory response, and platelet aggregation. Is lethal to mice. The protein is Dermonecrotic toxin LlSicTox-alphaIII1ii of Loxosceles laeta (South American recluse spider).